The following is a 234-amino-acid chain: Matrix protein 1 (234 aa).

The segment at 1-103 (MHERSKPKTT…QELAEGGIRM (103 aa)) is disordered. A compositionally biased stretch (basic and acidic residues) spans 76–96 (CDERSTIGRHGNADERPHQEL). The stretch at 183–234 (PEVSFKERMEAEKKKLKELDDKIYKLRRRLRKMEYKKMGINREIDKLEDSVQ) forms a coiled coil.

Interacts with host HSC70.

The protein localises to the virion. It is found in the host cytoplasm. Its subcellular location is the host nucleus. In terms of biological role, may play a role in virus replication, from virus entry and uncoating to assembly and budding of the virus particle. Interaction of viral NEP with M1-Hsc70 is thought to promote nuclear export of the viral encapsidated genomes. The sequence is that of Matrix protein 1 from Infectious salmon anemia virus (isolate Atlantic salmon/Norway/810/9/99) (ISAV).